The primary structure comprises 414 residues: Testis-specific Y-encoded-like protein 4 (414 aa).

Disordered stretches follow at residues 1-129 (MSGL…AGQK) and 391-414 (PRRG…FQSG). Residues 24 to 40 (ASGDPDRDQCQGLREET) show a composition bias toward basic and acidic residues. Residues 101-112 (EAASAAEAADSS) are compositionally biased toward low complexity.

It belongs to the nucleosome assembly protein (NAP) family.

The sequence is that of Testis-specific Y-encoded-like protein 4 (TSPYL4) from Homo sapiens (Human).